The chain runs to 406 residues: Glutamyl-tRNA reductase (406 aa).

Substrate is bound by residues 50–53 (TCNR), S107, 112–114 (EPQ), and Q118. The Nucleophile role is filled by C51. Residue 187–192 (GAGEMG) participates in NADP(+) binding.

The protein belongs to the glutamyl-tRNA reductase family. As to quaternary structure, homodimer.

It carries out the reaction (S)-4-amino-5-oxopentanoate + tRNA(Glu) + NADP(+) = L-glutamyl-tRNA(Glu) + NADPH + H(+). It functions in the pathway porphyrin-containing compound metabolism; protoporphyrin-IX biosynthesis; 5-aminolevulinate from L-glutamyl-tRNA(Glu): step 1/2. Catalyzes the NADPH-dependent reduction of glutamyl-tRNA(Glu) to glutamate 1-semialdehyde (GSA). This chain is Glutamyl-tRNA reductase, found in Aquifex aeolicus (strain VF5).